The chain runs to 235 residues: Phosphatidylserine decarboxylase proenzyme (235 aa).

The active-site Schiff-base intermediate with substrate; via pyruvic acid is the serine 204. Serine 204 carries the post-translational modification Pyruvic acid (Ser); by autocatalysis.

The protein belongs to the phosphatidylserine decarboxylase family. PSD-A subfamily. As to quaternary structure, heterodimer of a large membrane-associated beta subunit and a small pyruvoyl-containing alpha subunit. It depends on pyruvate as a cofactor. Is synthesized initially as an inactive proenzyme. Formation of the active enzyme involves a self-maturation process in which the active site pyruvoyl group is generated from an internal serine residue via an autocatalytic post-translational modification. Two non-identical subunits are generated from the proenzyme in this reaction, and the pyruvate is formed at the N-terminus of the alpha chain, which is derived from the carboxyl end of the proenzyme. The post-translation cleavage follows an unusual pathway, termed non-hydrolytic serinolysis, in which the side chain hydroxyl group of the serine supplies its oxygen atom to form the C-terminus of the beta chain, while the remainder of the serine residue undergoes an oxidative deamination to produce ammonia and the pyruvoyl prosthetic group on the alpha chain.

It localises to the cell membrane. It catalyses the reaction a 1,2-diacyl-sn-glycero-3-phospho-L-serine + H(+) = a 1,2-diacyl-sn-glycero-3-phosphoethanolamine + CO2. Its pathway is phospholipid metabolism; phosphatidylethanolamine biosynthesis; phosphatidylethanolamine from CDP-diacylglycerol: step 2/2. Functionally, catalyzes the formation of phosphatidylethanolamine (PtdEtn) from phosphatidylserine (PtdSer). The chain is Phosphatidylserine decarboxylase proenzyme from Mycobacterium sp. (strain KMS).